A 34-amino-acid chain; its full sequence is U2-theraphotoxin-Bs1a (34 aa).

Intrachain disulfides connect Cys2–Cys16, Cys9–Cys21, and Cys15–Cys28.

Expressed by the venom gland.

It localises to the secreted. The protein is U2-theraphotoxin-Bs1a of Brachypelma smithi (Mexican red knee tarantula).